Consider the following 108-residue polypeptide: MEIAFLNSLVVTSPGFYKAEKITLDEVKQWLKHYDGRYKSFIGHKSTAQFLQKLLGIRIEQNRKTFRHMKYQKAICFSLYERYPENVLLTQRDLEKARYQFYLLTRLD.

This is an uncharacterized protein from Bacillus subtilis (strain 168).